Here is a 1005-residue protein sequence, read N- to C-terminus: Retinoblastoma-related protein (1005 aa).

The tract at residues 404–605 is domain A; it reads TPVSTAMTTA…EKGSSMYNSL (202 aa). The pocket stretch occupies residues 404 to 853; sequence TPVSTAMTTA…NEIFIPSVKP (450 aa). The segment at 606-722 is spacer; it reads TIARPNLSNE…HPTRGETCAE (117 aa). Residues 723 to 853 form a domain B region; that stretch reads TAVNLFFSKI…NEIFIPSVKP (131 aa). Over residues 863-873 the composition is skewed to polar residues; that stretch reads VPKNPNNQVSE. Positions 863 to 899 are disordered; the sequence is VPKNPNNQVSETNKKDESGPCPCPGSPKVSSFPSLPD.

The protein belongs to the retinoblastoma protein (RB) family.

Its subcellular location is the nucleus. In terms of biological role, regulator of biological processes that recruits a histone deacetylase to control gene transcription. May play a role in the entry into mitosis, negatively regulating the cell proliferation. Formation of stable complexes with geminiviridae replication-associated proteins may create a cellular environment which favors viral DNA replication. This chain is Retinoblastoma-related protein (RBR), found in Pilosella piloselloides (Glaucous king-devil hawkweed).